Here is a 502-residue protein sequence, read N- to C-terminus: MAGVSPVVNHPYTTNSGDFIELGMEPAQKVQVDLDEAFNQMLHDGKVEEVVEAINGSPDLLSESDVENAKNNEHTYDIDNKNFNFEPKNSVNKTETIREELDQAASKILIETLDLHQKEGFEETIVTEEATDAVDLEAKGTTHGENDLDEVPTELNELANEVVDVDDVVSPSSELNAQSVNNILPISDDPKDSTSEAETRDFNWLSKGIVIFPNSSECAFYGNNNDEGMYLYSNGDDLNENTIEDFFGLVRARLESLNLLDSDSELLCEFPDLSLKINEDNVYASQIHLVDILEILTVHCDLEESFSIVFSTQPRFIARYNELVQAVSSSSNSEIDEVEDAETIDSKILEKRNDLNNEEPNSVVAEDGSEIITLDENDQSPNEATEKLRDNDLEESLIKDENLEDVEDENVKLDNYNIDGSLNNADLSQEPITNDGENVDWEATSEDVLERGYESAFPESEGTINSSKRRLSVTTDTENIELSDELASAGTPKKSKLMPSDD.

Serine 328, serine 330, and serine 331 each carry phosphoserine. Disordered stretches follow at residues 353 to 391 (NDLN…LRDN), 420 to 440 (GSLN…ENVD), and 454 to 502 (ESAF…PSDD). The segment covering 367 to 378 (DGSEIITLDEND) has biased composition (acidic residues). Composition is skewed to polar residues over residues 420-436 (GSLN…TNDG) and 462-477 (GTIN…TTDT).

This sequence belongs to the RMR1 family.

The protein resides in the cytoplasm. Its subcellular location is the nucleus. Its function is as follows. Required for normal levels of gene conversion events during meiosis. In Schizosaccharomyces pombe (strain 972 / ATCC 24843) (Fission yeast), this protein is Reduced meiotic recombination protein C1442.04c.